Here is a 136-residue protein sequence, read N- to C-terminus: Nuclear receptor 2C2-associated protein (136 aa).

The protein belongs to the NR2C2AP family.

It is found in the nucleus. Functionally, may act as a repressor of nr2c2-mediated transactivation by suppressing the binding between nr2c2 and its response element in target genes. This chain is Nuclear receptor 2C2-associated protein (nr2c2ap), found in Xenopus laevis (African clawed frog).